A 445-amino-acid polypeptide reads, in one-letter code: Argininosuccinate synthase (445 aa).

ATP-binding positions include 17 to 25 and Ala43; that span reads AFSGGLDTS. Residue Tyr99 participates in L-citrulline binding. ATP is bound by residues Gly129 and Thr131. The L-aspartate site is built by Thr131, Asn135, and Asp136. Asn135 lines the L-citrulline pocket. Residue Asp136 coordinates ATP. L-citrulline contacts are provided by Arg139 and Ser192. ATP is bound at residue Asp194. Residues Thr201, Glu203, and Glu280 each coordinate L-citrulline.

It belongs to the argininosuccinate synthase family. Type 2 subfamily. In terms of assembly, homotetramer.

The protein resides in the cytoplasm. It carries out the reaction L-citrulline + L-aspartate + ATP = 2-(N(omega)-L-arginino)succinate + AMP + diphosphate + H(+). It functions in the pathway amino-acid biosynthesis; L-arginine biosynthesis; L-arginine from L-ornithine and carbamoyl phosphate: step 2/3. The sequence is that of Argininosuccinate synthase (argG) from Bradyrhizobium diazoefficiens (strain JCM 10833 / BCRC 13528 / IAM 13628 / NBRC 14792 / USDA 110).